The primary structure comprises 376 residues: Homeobox protein extradenticle (376 aa).

The disordered stretch occupies residues 1–37 (MEDPNRMLAHTGGMMAPQGYGLSGQDDGQNAGSENEV). The 200-residue stretch at 38-237 (RKQKDIGEIL…VMILRSRFLD (200 aa)) folds into the PBC domain. Positions 45-124 (EILQQIMSIS…EGVAGPEKGG (80 aa)) are PBC-A. The interval 127-237 (AAAASAAAAS…VMILRSRFLD (111 aa)) is PBC-B. The homeobox; TALE-type DNA-binding region spans 238 to 300 (ARRKRRNFSK…NKRIRYKKNI (63 aa)). Positions 318–335 (ASPYSMAGPPSGTTTPMM) are enriched in low complexity. The interval 318 to 376 (ASPYSMAGPPSGTTTPMMSPAPPQDSMGYPMGSGGYDQQQPYDNSMGGYDPNLHQDLSP) is disordered.

This sequence belongs to the TALE/PBX homeobox family. As to quaternary structure, interacts with Ubx and hth. Prior to full germband retraction it is ubiquitously present, after germband retraction, mostly present in the anterior portion of the ventral nerve cord.

The protein resides in the nucleus. Functionally, transcription factor which acts with the selector homeodomain proteins altering the regulation of downstream target genes such as wingless (wg), teashirt (tsh) and decapentaplegic (dpp), thus affecting segmental identity. Delimits the eye field and prevent inappropriate eye development. Required for proper localization of chordotonal organs within the peripheral nervous system. The sequence is that of Homeobox protein extradenticle (exd) from Drosophila melanogaster (Fruit fly).